The following is a 369-amino-acid chain: Putative FAD-dependent monooxygenase YetM (369 aa).

The first 32 residues, 1 to 32, serve as a signal peptide directing secretion; it reads MKHMLIAGGGIGGLSAAISLRKAGFSVTLCEA. Residues G12, 31–32, V126, and D285 contribute to the FAD site; that span reads EA.

FAD serves as cofactor.

This Bacillus subtilis (strain 168) protein is Putative FAD-dependent monooxygenase YetM (yetM).